The primary structure comprises 191 residues: Cell division protein SepF (191 aa).

Residues 151 to 164 (SSSPEEASPSSVST) show a composition bias toward low complexity. Positions 151–191 (SSSPEEASPSSVSTEKTPQYSLGKNTTPEPAWGNSKLSAYS) are disordered. A compositionally biased stretch (polar residues) spans 165 to 178 (EKTPQYSLGKNTTP).

It belongs to the SepF family. As to quaternary structure, homodimer. Interacts with FtsZ.

The protein localises to the cytoplasm. Its function is as follows. Cell division protein that is part of the divisome complex and is recruited early to the Z-ring. Probably stimulates Z-ring formation, perhaps through the cross-linking of FtsZ protofilaments. Its function overlaps with FtsA. The chain is Cell division protein SepF from Prochlorococcus marinus (strain MIT 9301).